The primary structure comprises 329 residues: Ribosomal RNA small subunit methyltransferase H (329 aa).

S-adenosyl-L-methionine-binding positions include 34–36, D59, F86, D112, and Q119; that span reads GGH.

The protein belongs to the methyltransferase superfamily. RsmH family.

The protein localises to the cytoplasm. It catalyses the reaction cytidine(1402) in 16S rRNA + S-adenosyl-L-methionine = N(4)-methylcytidine(1402) in 16S rRNA + S-adenosyl-L-homocysteine + H(+). Its function is as follows. Specifically methylates the N4 position of cytidine in position 1402 (C1402) of 16S rRNA. The protein is Ribosomal RNA small subunit methyltransferase H of Chlorobium phaeobacteroides (strain DSM 266 / SMG 266 / 2430).